The sequence spans 134 residues: MKVVHTVGKRRTAIARATATEGSGKIRINKKPLELMEPKYIKMKLMEPVILAGEILGSIDVDVDVKGGGTVSQMDAARTALGKAIIEFTGKMELKEMFLSYDRTLLVSDARRTEPHKPSKSSKGPRARRQKSYR.

The tract at residues Asp-109–Arg-134 is disordered. Over residues Pro-118–Arg-134 the composition is skewed to basic residues.

This sequence belongs to the universal ribosomal protein uS9 family.

This is Small ribosomal subunit protein uS9 from Methanococcus vannielii (strain ATCC 35089 / DSM 1224 / JCM 13029 / OCM 148 / SB).